A 306-amino-acid chain; its full sequence is Proline-rich transmembrane protein 1 (306 aa).

The tract at residues 1–142 (MSSEKSGLPD…PPPAPAQTAQ (142 aa)) is disordered. Topologically, residues 1 to 223 (MSSEKSGLPD…LEPRRPPHDY (223 aa)) are cytoplasmic. The segment covering 15-36 (TSPPPYNAPQPPAEPPAPPPQA) has biased composition (pro residues). A compositionally biased stretch (basic residues) spans 40–49 (SHHHHHHHYH). 2 stretches are compositionally biased toward pro residues: residues 87–111 (HAPP…PPDP) and 121–137 (PLPP…PPAP). A helical membrane pass occupies residues 224–244 (MPIAVLTTICCFWPTGIIAIF). The Extracellular portion of the chain corresponds to 245–275 (KAVQVRTALARGDMVSAEIASREARNFSFIS). Residues 276-296 (LAVGIAAMVLCTILTVVIIIA) constitute an intramembrane region (helical). The Extracellular portion of the chain corresponds to 297-306 (AQHHENYWDP).

Belongs to the CD225/Dispanin family. As to quaternary structure, component of the outer core of AMPAR complex. AMPAR complex consists of an inner core made of 4 pore-forming GluA/GRIA proteins (GRIA1, GRIA2, GRIA3 and GRIA4) and 4 major auxiliary subunits arranged in a twofold symmetry. One of the two pairs of distinct binding sites is occupied either by CNIH2, CNIH3 or CACNG2, CACNG3. The other harbors CACNG2, CACNG3, CACNG4, CACNG8 or GSG1L. This inner core of AMPAR complex is complemented by outer core constituents binding directly to the GluA/GRIA proteins at sites distinct from the interaction sites of the inner core constituents. Outer core constituents include at least PRRT1, PRRT2, CKAMP44/SHISA9, FRRS1L and NRN1. The proteins of the inner and outer core serve as a platform for other, more peripherally associated AMPAR constituents. Alone or in combination, these auxiliary subunits control the gating and pharmacology of the AMPAR complex and profoundly impact their biogenesis and protein processing.

The protein localises to the cell membrane. It is found in the synapse. Required to maintain a pool of extrasynaptic AMPA-regulated glutamate receptors (AMPAR) which is necessary for synapse development and function. Regulates basal AMPAR function and synaptic transmission during development but is dispensable at mature hippocampal synapses. Plays a role in regulating basal phosphorylation levels of glutamate receptor GRIA1 and promotes GRIA1 and GRIA2 cell surface expression. In Homo sapiens (Human), this protein is Proline-rich transmembrane protein 1.